The sequence spans 120 residues: uncharacterized protein (120 aa).

This is an uncharacterized protein from Aquifex aeolicus (strain VF5).